A 1230-amino-acid chain; its full sequence is Soluble starch synthase 3, chloroplastic/amyloplastic (1230 aa).

The transit peptide at 1–60 directs the protein to the chloroplast; that stretch reads MDVPFPLHRSLSCTSVSNAITHLKIKPILGFVSHGTTSLSVQSSSWRKDGMVTGVSFSIC. Positions 66 to 189 are disordered; that stretch reads RRRRKVSTPR…KDAVKLNKSK (124 aa). Positions 124–145 are enriched in basic and acidic residues; that stretch reads VEARVETSDDDTKGVVRDHKFL. The span at 152–170 shows a compositional bias: polar residues; it reads NGSTKSISMSPVRVSSQFV. Over residues 177-189 the composition is skewed to basic and acidic residues; the sequence is GDDKDAVKLNKSK. Residue K794 coordinates ADP-alpha-D-glucose.

Belongs to the glycosyltransferase 1 family. Bacterial/plant glycogen synthase subfamily. Tuber, sink and source leaves.

The protein resides in the plastid. It is found in the chloroplast. The protein localises to the amyloplast. It carries out the reaction [(1-&gt;4)-alpha-D-glucosyl](n) + ADP-alpha-D-glucose = [(1-&gt;4)-alpha-D-glucosyl](n+1) + ADP + H(+). The protein operates within glycan biosynthesis; starch biosynthesis. Its function is as follows. May account for most of the soluble starch synthase activity in the tubers. Contributes only a tiny percentage of the granule-bound activity, but may also contribute to the deposition of transient starch in chloroplasts of leaves. This Solanum tuberosum (Potato) protein is Soluble starch synthase 3, chloroplastic/amyloplastic (SS3).